Reading from the N-terminus, the 214-residue chain is Germin-like protein (214 aa).

A signal peptide spans 1-22; sequence MVMMRIFFFLFLLAFPVFTANA. A disulfide bond links Cys-28 and Cys-44. The 147-residue stretch at 58–204 folds into the Cupin type-1 domain; the sequence is SGLAKPGNTT…TTCLDEATIK (147 aa). Mn(2+)-binding residues include His-106, His-108, and Glu-113.

The protein belongs to the germin family. Oligomer (believed to be a pentamer but probably hexamer). In terms of tissue distribution, cotyledons and leaves.

Its subcellular location is the secreted. The protein localises to the extracellular space. It localises to the apoplast. The sequence is that of Germin-like protein (GLP) from Ipomoea nil (Japanese morning glory).